We begin with the raw amino-acid sequence, 316 residues long: Elongation factor Ts, mitochondrial (316 aa).

A mitochondrion-targeting transit peptide spans Met-1–Leu-18. The disordered stretch occupies residues Glu-245–Val-269.

This sequence belongs to the EF-Ts family.

Its subcellular location is the mitochondrion. Functionally, associates with the EF-Tu.GDP complex and induces the exchange of GDP to GTP. It remains bound to the aminoacyl-tRNA.EF-Tu.GTP complex up to the GTP hydrolysis stage on the ribosome. The chain is Elongation factor Ts, mitochondrial from Caenorhabditis elegans.